The sequence spans 274 residues: Large ribosomal subunit protein uL2 (274 aa).

The segment at 1 to 23 (MAIKIYRPTSPGRRHHSVSSFEE) is disordered.

This sequence belongs to the universal ribosomal protein uL2 family. Part of the 50S ribosomal subunit. Forms a bridge to the 30S subunit in the 70S ribosome.

Its function is as follows. One of the primary rRNA binding proteins. Required for association of the 30S and 50S subunits to form the 70S ribosome, for tRNA binding and peptide bond formation. It has been suggested to have peptidyltransferase activity; this is somewhat controversial. Makes several contacts with the 16S rRNA in the 70S ribosome. This Dehalococcoides mccartyi (strain ATCC BAA-2100 / JCM 16839 / KCTC 5957 / BAV1) protein is Large ribosomal subunit protein uL2.